A 161-amino-acid polypeptide reads, in one-letter code: Troponin C, slow skeletal and cardiac muscles (161 aa).

N-acetylmethionine is present on Met-1. EF-hand domains are found at residues 16 to 51, 52 to 87, 92 to 127, and 128 to 161; these read QKNE…LGQN, PTPE…CMKD, KSEE…TGET, and ITED…KGVE. Asp-65, Asp-67, Ser-69, Thr-71, and Glu-76 together coordinate Ca(2+). Ser-98 carries the phosphoserine modification. The Ca(2+) site is built by Asp-105, Asn-107, Asp-109, Tyr-111, Glu-116, Asp-141, Asn-143, Asp-145, Arg-147, and Glu-152.

It belongs to the troponin C family.

Troponin is the central regulatory protein of striated muscle contraction. Tn consists of three components: Tn-I which is the inhibitor of actomyosin ATPase, Tn-T which contains the binding site for tropomyosin and Tn-C. The binding of calcium to Tn-C abolishes the inhibitory action of Tn on actin filaments. The polypeptide is Troponin C, slow skeletal and cardiac muscles (TNNC1) (Bos taurus (Bovine)).